A 1224-amino-acid chain; its full sequence is MRLKDISKTATLAWSPRGVNDNQALLALGGYTGTEGSKNSDTLLELWNENPESQKPVGSIDVKTRFYDLAWEKSLDKPMGVIAGSLEDGGIGFWDPAAILKSDEASASIATYKSENGSILGPLDFNRLQPNLLASGDNKGDVWVWDIKHPQQPFALPKQNRSSEVHVVSWNNKVSHILASGNATEYTTVWDVKLKRQVLNLSYLGAAGVSAATGAVNSIAWHPNNATRLATAIDDNRNPIILTWDLRQPTVPQNILTGHQKAALSLSWCPEDPTFLLSSGKDGRAMVWNVETGESLGSFPRSGNWYTKSSWCPSNSNRVAVASLEGKVSIFSIQSTNTDKSQEASIKGATSIDDNEFFNNLPSIAGSQEPSFSLPLAPKWFKVPVGARFGFPNKIVSFSPNSKEVTITSAPDEVEQDEAKSFHSSAKFQTEKEITDFCQKGVEESASEEEAINWKLLMAVSKRASRSKFAELLGYKTLKPKNDEDDSKVDESVAKDSTTPNELSKNANNENYDDDSSFYGKLAESVQEVSIADKKDAEIVKDSFKIFNPEDSDLEKNITEALLTGDVLSAVKACLEEKKISEALFLSTFGGKECRKCVRDAFYELQEHKPSYMRLSACIADNDLQNVVDNAEVSEWKDIFVFICTYATDDEFAPLCSTLGQRLEDLEDEKSIRSAEFCYIASKSLQSYANLWLKQLATSTKTSKAASAYGAYVEQLTKLMDKVSMFRSIVVYKDDELSATKDWKLAGLYEVYIAYAKILSASGKFDDAMSYLNLVPTEFPGAKEEIQRLTMLLEPHAVPPIHQIKQTGYAPVQPKTSQASSILPTVPRTTSYTSPYATTSSHITPADVHPLPPPSTSTTAGWNDAPMLGQLPMRRAAPSMAPVRSPFPGASSAQPAAMSRTSSVSTLPPPPPTASMTASAPAIASPPPPKVGETYHPPTASGTRVPPVQQPSHPNPYTPVAPQSPVAAASRISSSPNMPPSNPYTPIAVASSTVNPAHTYKPHGGSQIVPPPKQPANRVVPLPPTASQRASAYEPPTVSVPSPSALSPSVTPQLPPVSSRLPPVSATRPQIPQPPPVSTALPSSSAVSRPPIATSAGRSSTAASTSAPLTYPAGDRSHIPGNLRPIYEMLNAELQRVSQSLPPQMSRVVHDTEKRLNMLFDRLNSNVLSKPLTDELLALATSLNAHDYQTASNIQTNIVTTLGDQCEHWIVGVTRLITLSKSTT.

7 WD repeats span residues 18–57, 61–104, 114–155, 160–200, 211–254, 258–300, and 302–341; these read GVND…QKPV, DVKT…KSDE, SENG…QPFA, NRSS…QVLN, AATG…VPQN, GHQK…GSFP, and SGNW…TDKS. Residues 388 to 410 form a WD 8; interaction with sec13 repeat; that stretch reads RFGFPNKIVSFSPNSKEVTITSA. Disordered stretches follow at residues 480–512, 840–866, and 879–1116; these read PKND…NENY, SSHI…NDAP, and SMAP…AGDR. The segment covering 495–510 has biased composition (polar residues); the sequence is KDSTTPNELSKNANNE. Threonine 499 carries the phosphothreonine modification. Composition is skewed to low complexity over residues 914 to 923, 960 to 976, 1035 to 1065, and 1093 to 1107; these read ASMTASAPAI, VAPQ…SSSP, PPTV…PPVS, and ATSA…STSA. Serine 1042 and serine 1044 each carry phosphoserine.

The protein belongs to the WD repeat SEC31 family. As to quaternary structure, the COPII coat is composed of at least 5 proteins: the sec23/24 complex, the sec13/31 complex, and the protein sar1. sec13 and sec31 make a 2:2 tetramer that forms the edge element of the COPII outer coat. The tetramer self-assembles in multiple copies to form the complete polyhedral cage. Interacts (via WD 8) with sec13.

The protein resides in the cytoplasmic vesicle. It is found in the COPII-coated vesicle membrane. It localises to the endoplasmic reticulum membrane. Functionally, component of the coat protein complex II (COPII) which promotes the formation of transport vesicles from the endoplasmic reticulum (ER). The coat has two main functions, the physical deformation of the endoplasmic reticulum membrane into vesicles and the selection of cargo molecules. The chain is Protein transport protein sec31 (sec31) from Schizosaccharomyces pombe (strain 972 / ATCC 24843) (Fission yeast).